The primary structure comprises 74 residues: MFFLGFLSVTMDYWSTKVKIYSYTLLTLLVITLICYLIHIFCKLRMKKNSVTNNMPPPPPPYTVSSRCSQYYID.

A helical membrane pass occupies residues 20–40 (IYSYTLLTLLVITLICYLIHI).

Belongs to the asfivirus KP93L family.

The protein resides in the host membrane. This is an uncharacterized protein from African swine fever virus (isolate Tick/South Africa/Pretoriuskop Pr4/1996) (ASFV).